The primary structure comprises 1091 residues: Voltage-dependent calcium channel subunit alpha-2/delta-1 (1091 aa).

The first 24 residues, 1 to 24 (MAAGCLLALTLTLFQSWLIGPSSE), serve as a signal peptide directing secretion. Residues 25–1061 (EPFPSPVTIK…VLEDYTDCGG (1037 aa)) are Extracellular-facing. A glycan (N-linked (GlcNAc...) asparagine) is linked at Asn-92. Phosphoserine is present on Ser-119. N-linked (GlcNAc...) asparagine glycans are attached at residues Asn-136 and Asn-184. Positions 252–429 (DMLILVDVSG…INTQEYLDVL (178 aa)) constitute a VWFA domain. Residues Asp-258, Ser-260, and Ser-262 each coordinate a divalent metal cation. Residues 258-262 (DVSGS) carry the MIDAS-like motif motif. N-linked (GlcNAc...) asparagine glycosylation is found at Asn-323 and Asn-347. Cys-403 and Cys-1047 form a disulfide bridge. The 92-residue stretch at 445 to 536 (WTNVYLDALE…QPKNPKSQEP (92 aa)) folds into the Cache domain. Residues Asn-593, Asn-769, Asn-876, and Asn-973 are each glycosylated (N-linked (GlcNAc...) asparagine). A helical transmembrane segment spans residues 1062 to 1082 (VSGLNPSLWSIFGLQFILLWL). The Cytoplasmic segment spans residues 1083 to 1091 (VSGSRHYLW).

This sequence belongs to the calcium channel subunit alpha-2/delta family. As to quaternary structure, dimer formed of alpha-2-1 and delta-1 chains; disulfide-linked. Voltage-dependent calcium channels are multisubunit complexes, consisting of alpha-1 (CACNA1), alpha-2 (CACNA2D), beta (CACNB) and delta (CACNA2D) subunits in a 1:1:1:1 ratio. Post-translationally, proteolytically processed into subunits alpha-2-1 and delta-1 that are disulfide-linked.

It is found in the membrane. The protein resides in the cell membrane. In terms of biological role, the alpha-2/delta subunit of voltage-dependent calcium channels regulates calcium current density and activation/inactivation kinetics of the calcium channel. Plays an important role in excitation-contraction coupling. The chain is Voltage-dependent calcium channel subunit alpha-2/delta-1 (Cacna2d1) from Rattus norvegicus (Rat).